Reading from the N-terminus, the 87-residue chain is Small ribosomal subunit protein bS16 (87 aa).

This sequence belongs to the bacterial ribosomal protein bS16 family.

The polypeptide is Small ribosomal subunit protein bS16 (Aster yellows witches'-broom phytoplasma (strain AYWB)).